The following is a 180-amino-acid chain: Acireductone dioxygenase 1 (180 aa).

4 residues coordinate Fe(2+): His82, His84, Glu88, and His127. The Ni(2+) site is built by His82, His84, Glu88, and His127.

It belongs to the acireductone dioxygenase (ARD) family. It depends on Fe(2+) as a cofactor. Ni(2+) serves as cofactor.

The protein resides in the cytoplasm. It localises to the nucleus. It carries out the reaction 1,2-dihydroxy-5-(methylsulfanyl)pent-1-en-3-one + O2 = 4-methylsulfanyl-2-oxobutanoate + formate + 2 H(+). The enzyme catalyses 1,2-dihydroxy-5-(methylsulfanyl)pent-1-en-3-one + O2 = 3-(methylsulfanyl)propanoate + CO + formate + 2 H(+). It functions in the pathway amino-acid biosynthesis; L-methionine biosynthesis via salvage pathway; L-methionine from S-methyl-5-thio-alpha-D-ribose 1-phosphate: step 5/6. Functionally, catalyzes 2 different reactions between oxygen and the acireductone 1,2-dihydroxy-3-keto-5-methylthiopentene (DHK-MTPene) depending upon the metal bound in the active site. Fe-containing acireductone dioxygenase (Fe-ARD) produces formate and 2-keto-4-methylthiobutyrate (KMTB), the alpha-ketoacid precursor of methionine in the methionine recycle pathway. Ni-containing acireductone dioxygenase (Ni-ARD) produces methylthiopropionate, carbon monoxide and formate, and does not lie on the methionine recycle pathway. The polypeptide is Acireductone dioxygenase 1 (Sorghum bicolor (Sorghum)).